The sequence spans 407 residues: Chorismate synthase (407 aa).

NADP(+) contacts are provided by Arg40 and Arg46. FMN is bound by residues 138–140 (RAS) and 259–260 (QA). Over residues 275–284 (RRGSRAHDEM) the composition is skewed to basic and acidic residues. Residues 275-308 (RRGSRAHDEMYPGTDGVVRSTNRAGGLEGGMTNG) are disordered. Residues Gly303, 318–322 (KPIST), and Arg344 each bind FMN.

It belongs to the chorismate synthase family. As to quaternary structure, homotetramer. FMNH2 serves as cofactor.

The enzyme catalyses 5-O-(1-carboxyvinyl)-3-phosphoshikimate = chorismate + phosphate. It participates in metabolic intermediate biosynthesis; chorismate biosynthesis; chorismate from D-erythrose 4-phosphate and phosphoenolpyruvate: step 7/7. Catalyzes the anti-1,4-elimination of the C-3 phosphate and the C-6 proR hydrogen from 5-enolpyruvylshikimate-3-phosphate (EPSP) to yield chorismate, which is the branch point compound that serves as the starting substrate for the three terminal pathways of aromatic amino acid biosynthesis. This reaction introduces a second double bond into the aromatic ring system. The polypeptide is Chorismate synthase (Mycobacterium ulcerans (strain Agy99)).